A 953-amino-acid chain; its full sequence is Coiled-coil domain-containing protein 14 (953 aa).

The span at 1 to 21 (MKRGIRRDPFRKRKLGGRAKK) shows a compositional bias: basic residues. 2 disordered regions span residues 1–22 (MKRGIRRDPFRKRKLGGRAKKV) and 52–72 (SGARPGQVLSSGRHTGPAKLT). Ser124 is modified (phosphoserine). Disordered stretches follow at residues 126-189 (SETA…TSDL) and 268-287 (PPCPPKVHSEVQTDGNSQFA). A compositionally biased stretch (basic residues) spans 145–154 (YGSKKKRHEK). Basic and acidic residues predominate over residues 169–187 (DNKKQIPNEASARSERDTS). A compositionally biased stretch (polar residues) spans 277–287 (EVQTDGNSQFA). Coiled coils occupy residues 383–413 (LATNEEKCAREQIREATSERKDLNIHVRDTK) and 483–618 (AMQP…AEKE). Ser670, Ser754, and Ser798 each carry phosphoserine.

In terms of assembly, interacts with CEP63.

Its subcellular location is the cytoplasm. It is found in the cytoskeleton. The protein localises to the microtubule organizing center. It localises to the centrosome. The protein resides in the centriolar satellite. Functionally, negatively regulates centriole duplication. Negatively regulates CEP63 and CDK2 centrosomal localization. The polypeptide is Coiled-coil domain-containing protein 14 (CCDC14) (Homo sapiens (Human)).